The primary structure comprises 265 residues: Type III pantothenate kinase (265 aa).

6-13 (DVGNTHTV) is a binding site for ATP. Residue 112 to 115 (GADR) coordinates substrate. The active-site Proton acceptor is the Asp-114. Residue Asp-134 coordinates K(+). An ATP-binding site is contributed by Thr-137. Residue Thr-189 participates in substrate binding.

It belongs to the type III pantothenate kinase family. Homodimer. NH4(+) serves as cofactor. The cofactor is K(+).

It localises to the cytoplasm. It carries out the reaction (R)-pantothenate + ATP = (R)-4'-phosphopantothenate + ADP + H(+). It functions in the pathway cofactor biosynthesis; coenzyme A biosynthesis; CoA from (R)-pantothenate: step 1/5. In terms of biological role, catalyzes the phosphorylation of pantothenate (Pan), the first step in CoA biosynthesis. The sequence is that of Type III pantothenate kinase from Streptomyces griseus subsp. griseus (strain JCM 4626 / CBS 651.72 / NBRC 13350 / KCC S-0626 / ISP 5235).